We begin with the raw amino-acid sequence, 205 residues long: Small ribosomal subunit protein uS4 (205 aa).

Positions 18–46 (NIWGRPKSPVNRREYGPGQHGQRRKGKLS) are disordered. The S4 RNA-binding domain occupies 94–157 (RRLDTVVYRS…KQLAIVLEAN (64 aa)).

This sequence belongs to the universal ribosomal protein uS4 family. Part of the 30S ribosomal subunit. Contacts protein S5. The interaction surface between S4 and S5 is involved in control of translational fidelity.

One of the primary rRNA binding proteins, it binds directly to 16S rRNA where it nucleates assembly of the body of the 30S subunit. Its function is as follows. With S5 and S12 plays an important role in translational accuracy. The polypeptide is Small ribosomal subunit protein uS4 (Rhodopseudomonas palustris (strain BisB5)).